We begin with the raw amino-acid sequence, 539 residues long: Chaperonin GroEL 2 (539 aa).

ATP contacts are provided by residues 29–32 (TLGP), 86–90 (DGTTT), Gly-413, 477–479 (NAA), and Asp-493. A disordered region spans residues 519–539 (VVDKPEEEDSAAAGHGHGHSH).

Belongs to the chaperonin (HSP60) family. In terms of assembly, forms a cylinder of 14 subunits composed of two heptameric rings stacked back-to-back. Interacts with the co-chaperonin GroES.

The protein localises to the cytoplasm. The enzyme catalyses ATP + H2O + a folded polypeptide = ADP + phosphate + an unfolded polypeptide.. Together with its co-chaperonin GroES, plays an essential role in assisting protein folding. The GroEL-GroES system forms a nano-cage that allows encapsulation of the non-native substrate proteins and provides a physical environment optimized to promote and accelerate protein folding. In Saccharopolyspora erythraea (strain ATCC 11635 / DSM 40517 / JCM 4748 / NBRC 13426 / NCIMB 8594 / NRRL 2338), this protein is Chaperonin GroEL 2.